The chain runs to 854 residues: MNRKTVFRNVLLVAVVLLVIYAFSYFSNDTRDFKTVDTSVAISQLDAKNVASAQIDDREQQVRLWLKNGNDATDGKTQILAKYPASASEQIFDKVEGAGADKFNTTVTQESWLTSILLFVLPMIILFGIFFFVMNRMQGGGGRGGVMGFGKSKAKQLTKDMPKTTFADVAGADEAVEELYEIKDFLQNPARYQALGAKIPRGVLLYGPPGTGKTLLARAVAGEAGVPFFTISGSDFVEMFVGVGASRVRDMFEQAKQNSPCIIFVDEIDAVGRQRGAGLGGGHDEREQTLNQLLVEMDGFGDRTGIILIAATNRPDILDPALLRPGRFDRQIPVGAPDLAGRRAILRVHSQGKPIDPNADLEGLAKRTVGMSGADLANVINEAALLTARENGTVITEASLEESVDRVVGGPRRKSRIISEHEKKITAYHEGGHTLAAWAMPDIEPVYKVTILARGRTGGHAMTVPEDDKGLMTRSEMIARLVMAMGGRAAEELVFHEPTTGASSDIDMATKIARAMVTEYGMSAKLGAVRYGQEGGDPFLGRSMGVQSDYSHEIAREIDEEVRNLIEAAHTEAWAILNEYRDALDLIATELLERETLTRKDLEKILAGVEKRPRITAFNDFGGRTPSDRPPVKTPRELAIERGETWPEPAAAPVLVKAGAPNSGVPNGGVPNNGGLPNNGNQGPSNGYAQPSYPQPSAPQQTPQPGTPDYGAPAGWSAPGWPPRENPSPTYPGQQSGGYTGGQNPTPPNQSQGQYGQPQHGQPQPDQGQYGQPHPGQQAYPEQPHPGRRYPAQPDYPVQYPDGGPFADPNRGNPSGENQWQSPTPEQPQTPPPHHSAEDDGPSTARWDGPDGSR.

The Cytoplasmic portion of the chain corresponds to 1 to 5 (MNRKT). Residues 6–26 (VFRNVLLVAVVLLVIYAFSYF) traverse the membrane as a helical segment. Over 27–112 (SNDTRDFKTV…FNTTVTQESW (86 aa)) the chain is Extracellular. The chain crosses the membrane as a helical span at residues 113 to 133 (LTSILLFVLPMIILFGIFFFV). Over 134–854 (MNRMQGGGGR…ARWDGPDGSR (721 aa)) the chain is Cytoplasmic. Residue 207–214 (GPPGTGKT) participates in ATP binding. His429 contributes to the Zn(2+) binding site. Glu430 is a catalytic residue. Zn(2+)-binding residues include His433 and Asp505. Positions 658-854 (AGAPNSGVPN…ARWDGPDGSR (197 aa)) are disordered. Composition is skewed to low complexity over residues 661–692 (PNSG…AQPS) and 698–719 (APQQ…WSAP). Residues 720-730 (GWPPRENPSPT) show a composition bias toward pro residues. Positions 749 to 778 (NQSQGQYGQPQHGQPQPDQGQYGQPHPGQQ) are enriched in low complexity. A compositionally biased stretch (polar residues) spans 812–822 (GNPSGENQWQS). Pro residues predominate over residues 825–834 (PEQPQTPPPH).

The protein in the central section; belongs to the AAA ATPase family. It in the C-terminal section; belongs to the peptidase M41 family. Homohexamer. Zn(2+) is required as a cofactor.

It localises to the cell membrane. Acts as a processive, ATP-dependent zinc metallopeptidase for both cytoplasmic and membrane proteins. Plays a role in the quality control of integral membrane proteins. The chain is ATP-dependent zinc metalloprotease FtsH from Rhodococcus erythropolis (strain PR4 / NBRC 100887).